Consider the following 452-residue polypeptide: Major royal jelly protein 2 (452 aa).

Positions 1–17 (MTRWLFMVACLGIACQG) are cleaved as a signal peptide. N-linked (GlcNAc...) asparagine glycans are attached at residues N145 and N178. The interval 416–452 (NNNQNDNIQNTNNQNDNNQKNNKKNANNQKNNNQNDN) is disordered.

Post-translationally, N-linked core structure contains mannose (which consists of 8-alpha-mannosyl residues, one beta-mannosyl residue, and chitobiose). Secreted from the hypopharyngeal glands of the worker honey bee (at protein level); expression peaks at 12 days post eclosion. Expressed in the brains of adult worker bees peaking at 12 days post eclosion (at protein level). Expressed in the spermatheca of adult queen bees (at protein level); Expression levels are higher in mated queens than in virgin queens.

The protein localises to the secreted. Highly abundant protein component of royal jelly, a substance produced in the hypopharyngeal gland containing proteins, free amino acids, fatty acids, sugars and other nutrients, which is fed to developing larvae by worker nurse bees. Major royal jelly proteins (MRJPs) are high in essential amino acids and probably have a nutritional function in larval food. All larvae are fed some royal jelly (also known as worker jelly) early in their development but it forms the principal source of nutrition for larvae destined to become queen bees. Produced in the spermatheca of adult queen bees, along with other major royal jelly proteins, where it may act as a nutrient supply for sperm stored by mated queens, or be involved in energy metabolism. The chain is Major royal jelly protein 2 from Apis mellifera (Honeybee).